A 215-amino-acid chain; its full sequence is Uridine kinase (215 aa).

ATP is bound at residue 16–23; sequence GASASGKS.

This sequence belongs to the uridine kinase family.

The protein localises to the cytoplasm. It carries out the reaction uridine + ATP = UMP + ADP + H(+). It catalyses the reaction cytidine + ATP = CMP + ADP + H(+). It functions in the pathway pyrimidine metabolism; CTP biosynthesis via salvage pathway; CTP from cytidine: step 1/3. The protein operates within pyrimidine metabolism; UMP biosynthesis via salvage pathway; UMP from uridine: step 1/1. This Aliivibrio fischeri (strain ATCC 700601 / ES114) (Vibrio fischeri) protein is Uridine kinase.